The chain runs to 31 residues: Phospholipase A2 homolog P-elapitoxin-Aa1a beta chain (31 aa).

This sequence belongs to the phospholipase A2 family. Group I subfamily. As to quaternary structure, heterotrimer of alpha, beta and gamma chains, each related to PLA2. As to expression, expressed by the venom gland.

It is found in the secreted. Heterotrimer: Snake venom phospholipase A2 (PLA2) that has presynaptic neurotoxicity. Inhibits nerve-evoked twitch contractions but not responses to cholinergic agonists acetylcholine and carbachol and to depolarizing agonist KCl. Causes a fade in tetanic contractions. Displays a triphasic mode of action with depression, enhancement and blockade of neurotransmission. Does not display myotoxic activity such as changes in baseline muscle tension or inhibition of directly stimulated muscle twitches. All subunits are necessary for maximum toxicity. Functionally, monomer: The beta chain has no enzymatic activity and is not toxic by itself. This Acanthophis antarcticus (Common death adder) protein is Phospholipase A2 homolog P-elapitoxin-Aa1a beta chain.